A 179-amino-acid polypeptide reads, in one-letter code: Large ribosomal subunit protein uL5 (179 aa).

It belongs to the universal ribosomal protein uL5 family. Part of the 50S ribosomal subunit; part of the 5S rRNA/L5/L18/L25 subcomplex. Contacts the 5S rRNA and the P site tRNA. Forms a bridge to the 30S subunit in the 70S ribosome.

This is one of the proteins that bind and probably mediate the attachment of the 5S RNA into the large ribosomal subunit, where it forms part of the central protuberance. In the 70S ribosome it contacts protein S13 of the 30S subunit (bridge B1b), connecting the 2 subunits; this bridge is implicated in subunit movement. Contacts the P site tRNA; the 5S rRNA and some of its associated proteins might help stabilize positioning of ribosome-bound tRNAs. The chain is Large ribosomal subunit protein uL5 from Photorhabdus laumondii subsp. laumondii (strain DSM 15139 / CIP 105565 / TT01) (Photorhabdus luminescens subsp. laumondii).